Reading from the N-terminus, the 435-residue chain is S-locus-specific glycoprotein BS29-2 (435 aa).

The signal sequence occupies residues 1–30 (MKGVGKPYENSHTSFLLVFFVLTLFSPAFS). The Bulb-type lectin domain occupies 33–155 (TLSSIESLKI…NKNDRSGFLW (123 aa)). 5 N-linked (GlcNAc...) asparagine glycosylation sites follow: N113, N120, N244, N260, and N389. A PAN domain is found at 350–430 (CSGDGFTRMK…NGQDLYVRLA (81 aa)). 2 cysteine pairs are disulfide-bonded: C380–C405 and C388–C390.

In terms of tissue distribution, stigma.

Functionally, involved in sporophytic self-incompatibility system (the inability of flowering plants to achieve self-fertilization). The sequence is that of S-locus-specific glycoprotein BS29-2 (SLSG) from Brassica oleracea var. alboglabra (Chinese kale).